Reading from the N-terminus, the 204-residue chain is Pro-hevein (204 aa).

Residues 1–17 (MNIFIVVLLCLTGVAIA) form the signal peptide. Residues 18-60 (EQCGRQAGGKLCPNNLCCSQWGWCGSTDEYCSPDHNCQSNCKD) form the Chitin-binding type-1 domain. 4 disulfide bridges follow: cysteine 20–cysteine 35, cysteine 29–cysteine 41, cysteine 34–cysteine 48, and cysteine 54–cysteine 58. A propeptide spanning residues 61–66 (SGEGVG) is cleaved from the precursor. A Barwin domain is found at 68–189 (GSASNVLATY…VNYQFVDCGD (122 aa)). 3 disulfide bridges follow: cysteine 96–cysteine 128, cysteine 117–cysteine 151, and cysteine 131–cysteine 187.

Proteolytically processed to yield the two chains of the mature protein. In terms of tissue distribution, laticifer.

Its function is as follows. N-acetyl-D-glucosamine / N-acetyl-D-neuraminic acid binding lectin. Can inhibit fungal growth. The chain is Pro-hevein (HEV1) from Hevea brasiliensis (Para rubber tree).